The sequence spans 344 residues: MTDCWYIPEAVADRRDENRLSPNVPASYEVLGEVGIFYRHFDPKEVSDDIEGFIQPLLKKLNYQSYDVVNLSPANLGAEKFETLAEQHFMEHIHEDDEVRLILEGQGYFDVRDINDKWIRLLSKPGDCIVVPAGMYHRFTTDQSKDIKTLRIFKEAPRWIALNRGPEAEEKPARKEYLARLHAPAETAVGAANGRTIFSLRYPLKLDVELTAITKRLLEQHSKRPLALAIYLTGSTDPTTGESWCPDCVLAKPHVATRFAELRGKYGEERAIFLQLPVERASYLGNPNFPYRTHPTLQLASVPTLLVLTPAKDAKEKGDVQWHDLLDVKVRTCDADKADVLSLE.

Fe(2+) contacts are provided by H92, H94, E98, and H137. 4 residues coordinate Ni(2+): H92, H94, E98, and H137.

It belongs to the acireductone dioxygenase (ARD) family. Requires Fe(2+) as cofactor. The cofactor is Ni(2+).

It is found in the cytoplasm. The protein localises to the nucleus. It carries out the reaction 1,2-dihydroxy-5-(methylsulfanyl)pent-1-en-3-one + O2 = 4-methylsulfanyl-2-oxobutanoate + formate + 2 H(+). The enzyme catalyses 1,2-dihydroxy-5-(methylsulfanyl)pent-1-en-3-one + O2 = 3-(methylsulfanyl)propanoate + CO + formate + 2 H(+). It functions in the pathway amino-acid biosynthesis; L-methionine biosynthesis via salvage pathway; L-methionine from S-methyl-5-thio-alpha-D-ribose 1-phosphate: step 5/6. Catalyzes 2 different reactions between oxygen and the acireductone 1,2-dihydroxy-3-keto-5-methylthiopentene (DHK-MTPene) depending upon the metal bound in the active site. Fe-containing acireductone dioxygenase (Fe-ARD) produces formate and 2-keto-4-methylthiobutyrate (KMTB), the alpha-ketoacid precursor of methionine in the methionine recycle pathway. Ni-containing acireductone dioxygenase (Ni-ARD) produces methylthiopropionate, carbon monoxide and formate, and does not lie on the methionine recycle pathway. The sequence is that of Acireductone dioxygenase from Leishmania infantum.